The following is a 199-amino-acid chain: Putative pseudouridine methyltransferase (199 aa).

Residues L132 and C186 each coordinate S-adenosyl-L-methionine.

It belongs to the methyltransferase superfamily. TrmY family.

It is found in the cytoplasm. The polypeptide is Putative pseudouridine methyltransferase (Vibrio campbellii (strain ATCC BAA-1116)).